A 567-amino-acid chain; its full sequence is Urease subunit alpha (567 aa).

The 440-residue stretch at 128–567 folds into the Urease domain; the sequence is GGVDTHVHYI…LPLAQRYHLF (440 aa). Ni(2+) contacts are provided by histidine 133, histidine 135, and lysine 216. Lysine 216 is subject to N6-carboxylysine. Substrate is bound at residue histidine 218. Ni(2+)-binding residues include histidine 245 and histidine 271. The active-site Proton donor is histidine 319. Aspartate 359 lines the Ni(2+) pocket.

Belongs to the metallo-dependent hydrolases superfamily. Urease alpha subunit family. Heterotrimer of UreA (gamma), UreB (beta) and UreC (alpha) subunits. Three heterotrimers associate to form the active enzyme. The cofactor is Ni cation. Post-translationally, carboxylation allows a single lysine to coordinate two nickel ions.

The protein localises to the cytoplasm. The enzyme catalyses urea + 2 H2O + H(+) = hydrogencarbonate + 2 NH4(+). The protein operates within nitrogen metabolism; urea degradation; CO(2) and NH(3) from urea (urease route): step 1/1. This Pseudoalteromonas translucida (strain TAC 125) protein is Urease subunit alpha.